The following is a 215-amino-acid chain: Kinetochore protein Spc25 (215 aa).

A coiled-coil region spans residues D43 to A114.

This sequence belongs to the SPC25 family. As to quaternary structure, component of the Ndc80 complex, which is composed of Ndc80, Nuf2 and Spc25.

The protein resides in the nucleus. It localises to the chromosome. It is found in the centromere. The protein localises to the kinetochore. Its function is as follows. Acts as a component of the essential kinetochore-associated Ndc80 complex, which is required for chromosome segregation and spindle checkpoint activity during meiosis and mitosis. Required for kinetochore integrity and the organization of stable microtubule binding sites in the outer plate of the kinetochore. Participates in SAC signaling that responds specifically to disruptions in spindle microtubule dynamics. The NDC80 complex synergistically enhances the affinity of the SKA1 complex for microtubules and may allow the NDC80 complex to track depolymerizing microtubules. The sequence is that of Kinetochore protein Spc25 from Drosophila ananassae (Fruit fly).